A 551-amino-acid chain; its full sequence is Probable 4-coumarate--CoA ligase 1 (551 aa).

Positions 205, 206, 207, 208, 209, and 213 each coordinate ATP. Tyr253 contacts (E)-4-coumaroyl-AMP. Lys274 contacts CoA. Residues Glu276–Gln346 are SBD1. (E)-4-coumaroyl-AMP-binding residues include Ala323, Gln346, Gly347, and Thr351. Positions 346, 347, 351, 430, and 445 each coordinate ATP. An SBD2 region spans residues Gly347–Tyr409. The (E)-4-coumaroyl-AMP site is built by Lys447 and Lys451. The CoA site is built by Lys453 and Gly454. Lys537 is a binding site for ATP.

It belongs to the ATP-dependent AMP-binding enzyme family. It depends on Mg(2+) as a cofactor.

The enzyme catalyses (E)-4-coumarate + ATP + CoA = (E)-4-coumaroyl-CoA + AMP + diphosphate. It carries out the reaction (E)-4-coumarate + ATP + H(+) = (E)-4-coumaroyl-AMP + diphosphate. The catalysed reaction is (E)-4-coumaroyl-AMP + CoA = (E)-4-coumaroyl-CoA + AMP + H(+). It participates in phytoalexin biosynthesis; 3,4',5-trihydroxystilbene biosynthesis; 3,4',5-trihydroxystilbene from trans-4-coumarate: step 1/2. Functionally, carboxylate--CoA ligase that may use 4-coumarate as substrate. Follows a two-step reaction mechanism, wherein the carboxylate substrate first undergoes adenylation by ATP, followed by a thioesterification in the presence of CoA to yield the final CoA thioester. This is Probable 4-coumarate--CoA ligase 1 (4cl1) from Dictyostelium discoideum (Social amoeba).